Consider the following 453-residue polypeptide: Nuclear hormone receptor family member nhr-12 (453 aa).

Residues Met1–Gln37 form a disordered region. The segment covering Thr18 to Thr36 has biased composition (low complexity). The segment at residues Lys44–Asn119 is a DNA-binding region (nuclear receptor). 2 consecutive NR C4-type zinc fingers follow at residues Cys47–Cys67 and Cys83–Cys107. Residues Phe178–Lys451 form the NR LBD domain.

The protein belongs to the nuclear hormone receptor family.

Its subcellular location is the nucleus. Its function is as follows. Orphan nuclear receptor. The protein is Nuclear hormone receptor family member nhr-12 (nhr-12) of Caenorhabditis elegans.